The primary structure comprises 122 residues: Small ribosomal subunit protein uS13 (122 aa).

The tract at residues 96 to 122 (PVRGQRTRTNARTRKGPKKTVGVRRAK) is disordered.

It belongs to the universal ribosomal protein uS13 family. In terms of assembly, part of the 30S ribosomal subunit. Forms a loose heterodimer with protein S19. Forms two bridges to the 50S subunit in the 70S ribosome.

Functionally, located at the top of the head of the 30S subunit, it contacts several helices of the 16S rRNA. In the 70S ribosome it contacts the 23S rRNA (bridge B1a) and protein L5 of the 50S subunit (bridge B1b), connecting the 2 subunits; these bridges are implicated in subunit movement. Contacts the tRNAs in the A and P-sites. The protein is Small ribosomal subunit protein uS13 of Halothermothrix orenii (strain H 168 / OCM 544 / DSM 9562).